Here is a 482-residue protein sequence, read N- to C-terminus: MKFIIKLFPEITIKSQSVRLRFIKILSTSIRNVLKQYDETLAVVRHWDHIEVRAKDENQRPVIADALTRIPGIHHILEVEDRDYTDIHHIFEQTLEAYREQLEGKTFCVRVKRRGKQDFNSQDVERYVGGGLNQHIESARVKLSHPQVTVNLEIENDKLMLVKARREGIGGYPVGTQEDVLSLISGGFDSGVSSYMLMRRGCRVHYCFFNLGGAAHEIGVRQVAHYLWNRFASSHKVRFIAIDFEPVVGEILEKVEDGQMGVVLKRMMVRAASQIAERYGVQALVTGEALGQVSSQTLTNLRLIDNASDTLILRPLISHDKEHIIKVAREIGTEDFAKTMPEYCGVISKSPTVKAIKAKIEEEEGHFDFSILDRVVSEAKNVDIRTIAEQTQEQVTEVETVAEFDADQVILDIRSNDEQEDKPLKLDQVEVKPLPFYKLSTQFGDLDQSKTYLLYCERGVMSRLQALYLLEQGFTNVKVYRP.

In terms of domain architecture, THUMP spans 61–165 (PVIADALTRI…NDKLMLVKAR (105 aa)). ATP is bound by residues 183–184 (LI), K265, G287, and Q296. C344 and C456 form a disulfide bridge. The 79-residue stretch at 404–482 (FDADQVILDI…GFTNVKVYRP (79 aa)) folds into the Rhodanese domain. The Cysteine persulfide intermediate role is filled by C456.

Belongs to the ThiI family.

Its subcellular location is the cytoplasm. The enzyme catalyses [ThiI sulfur-carrier protein]-S-sulfanyl-L-cysteine + a uridine in tRNA + 2 reduced [2Fe-2S]-[ferredoxin] + ATP + H(+) = [ThiI sulfur-carrier protein]-L-cysteine + a 4-thiouridine in tRNA + 2 oxidized [2Fe-2S]-[ferredoxin] + AMP + diphosphate. The catalysed reaction is [ThiS sulfur-carrier protein]-C-terminal Gly-Gly-AMP + S-sulfanyl-L-cysteinyl-[cysteine desulfurase] + AH2 = [ThiS sulfur-carrier protein]-C-terminal-Gly-aminoethanethioate + L-cysteinyl-[cysteine desulfurase] + A + AMP + 2 H(+). It functions in the pathway cofactor biosynthesis; thiamine diphosphate biosynthesis. Functionally, catalyzes the ATP-dependent transfer of a sulfur to tRNA to produce 4-thiouridine in position 8 of tRNAs, which functions as a near-UV photosensor. Also catalyzes the transfer of sulfur to the sulfur carrier protein ThiS, forming ThiS-thiocarboxylate. This is a step in the synthesis of thiazole, in the thiamine biosynthesis pathway. The sulfur is donated as persulfide by IscS. The sequence is that of tRNA sulfurtransferase from Serratia proteamaculans (strain 568).